We begin with the raw amino-acid sequence, 544 residues long: MAANQPVVVLPENVKRFMGRDAQRMNILAGRIIGETVRSTLGPKGMDKMLVDDLGDIVVTNDGVTILKEMSVEHPAAKMLIEVAKTQEKEVGDGTTTAVVIAGELLRKAEELLDQNVHPTIVIKGYQLAVQKAQEVLKEIAMDVKADDKEILHKIAMTSITGKGAEKAKEKLGEMIVEAVTAVVDESGKVDKDLIKIEKKEGASVDETELINGVLIDKERVSPQMPKKIENAKIALLNCPIEVKETETDAEIRITDPTKLMEFIEQEEKMLKDMVDTIKASGANVLFCQKGIDDLAQHYLAKEGILAVRRVKKSDMEKLSKATGANVVTNIKDLKAEDLGEAGIVEERKIAGDAMIFVEECKHPKAVTMLIRGTTEHVIEEVARAVDDAIGVVACTIEDGKIVAGGGAAEIELAMKLRDYAEGVSGREQLAVRAFADALEVVPRTLAENAGLDAIEMLVKLRAKHAEGNNAYYGLNVFTGDVENMTENGVVEPLRVKTQAIQSATEATEMLLRIDDVIAAEKLSGGSGGDMGDMGGMGGMGGMM.

Belongs to the TCP-1 chaperonin family. In terms of assembly, forms an oligomeric complex of eight-membered rings.

Its function is as follows. Molecular chaperone; binds unfolded polypeptides in vitro, and has a weak ATPase activity. The polypeptide is Thermosome subunit (ths) (Methanothermococcus thermolithotrophicus (Methanococcus thermolithotrophicus)).